Consider the following 165-residue polypeptide: PTS system glucose-specific EIIA component (165 aa).

One can recognise a PTS EIIA type-1 domain in the interval 34–138 (DPVFAQKMMG…SSITPIIISN (105 aa)). Residues histidine 71 and histidine 86 each contribute to the Zn(2+) site. Histidine 86 functions as the Tele-phosphohistidine intermediate; for EIIA activity in the catalytic mechanism. At histidine 86 the chain carries Phosphohistidine; by HPr.

As to quaternary structure, heterodimer with glycerol kinase (glpk). Zn(2+) is required as a cofactor.

The protein resides in the cytoplasm. Its function is as follows. The phosphoenolpyruvate-dependent sugar phosphotransferase system (sugar PTS), a major carbohydrate active transport system, catalyzes the phosphorylation of incoming sugar substrates concomitantly with their translocation across the cell membrane. The enzyme II complex composed of PtsG and Crr is involved in glucose transport. The sequence is that of PTS system glucose-specific EIIA component (crr) from Oceanobacillus iheyensis (strain DSM 14371 / CIP 107618 / JCM 11309 / KCTC 3954 / HTE831).